A 361-amino-acid polypeptide reads, in one-letter code: Probable mannose-1-phosphate guanylyltransferase 3 (361 aa).

GDP-alpha-D-mannose-binding residues include L6 and V7. Diphosphate contacts are provided by G9, G11, T12, R13, and K23. GDP-alpha-D-mannose contacts are provided by G85, N109, D111, G146, and N173.

Belongs to the transferase hexapeptide repeat family.

It catalyses the reaction alpha-D-mannose 1-phosphate + GTP + H(+) = GDP-alpha-D-mannose + diphosphate. It participates in nucleotide-sugar biosynthesis; GDP-alpha-D-mannose biosynthesis; GDP-alpha-D-mannose from alpha-D-mannose 1-phosphate (GTP route): step 1/1. Catalyzes a reaction of the Smirnoff-Wheeler pathway, the major route to ascorbate biosynthesis in plants. The protein is Probable mannose-1-phosphate guanylyltransferase 3 of Oryza sativa subsp. japonica (Rice).